The following is a 310-amino-acid chain: Alpha/beta hydrolase domain-containing protein 17A (310 aa).

Active-site charge relay system residues include serine 190, aspartate 255, and histidine 284. Serine 307 is modified (phosphoserine).

It belongs to the AB hydrolase superfamily. ABHD17 family. Post-translationally, palmitoylated on cysteine residues located in a cysteine cluster at the N-terminus which promotes membrane localization. Palmitoylation is required for post-synaptic localization and for depalmitoylating activity towards DLG4/PSD95.

Its subcellular location is the cell membrane. It is found in the endosome membrane. The protein resides in the cell projection. The protein localises to the dendritic spine. It localises to the postsynaptic density membrane. It catalyses the reaction S-hexadecanoyl-L-cysteinyl-[protein] + H2O = L-cysteinyl-[protein] + hexadecanoate + H(+). Hydrolyzes fatty acids from S-acylated cysteine residues in proteins. Has depalmitoylating activity towards NRAS. Has depalmitoylating activity towards DLG4/PSD95. May have depalmitoylating activity towards MAP6. The protein is Alpha/beta hydrolase domain-containing protein 17A of Bos taurus (Bovine).